Here is a 385-residue protein sequence, read N- to C-terminus: tRNA(Met) cytidine acetate ligase (385 aa).

Residues 7–20 (VAEY…HEFL), glycine 101, asparagine 153, and arginine 178 contribute to the ATP site.

Belongs to the TmcAL family.

Its subcellular location is the cytoplasm. It catalyses the reaction cytidine(34) in elongator tRNA(Met) + acetate + ATP = N(4)-acetylcytidine(34) in elongator tRNA(Met) + AMP + diphosphate. Its function is as follows. Catalyzes the formation of N(4)-acetylcytidine (ac(4)C) at the wobble position of elongator tRNA(Met), using acetate and ATP as substrates. First activates an acetate ion to form acetyladenylate (Ac-AMP) and then transfers the acetyl group to tRNA to form ac(4)C34. This Lactobacillus gasseri (strain ATCC 33323 / DSM 20243 / BCRC 14619 / CIP 102991 / JCM 1131 / KCTC 3163 / NCIMB 11718 / NCTC 13722 / AM63) protein is tRNA(Met) cytidine acetate ligase.